The sequence spans 949 residues: Glycine dehydrogenase (decarboxylating) (949 aa).

Residue Lys700 is modified to N6-(pyridoxal phosphate)lysine.

Belongs to the GcvP family. The glycine cleavage system is composed of four proteins: P, T, L and H. It depends on pyridoxal 5'-phosphate as a cofactor.

It catalyses the reaction N(6)-[(R)-lipoyl]-L-lysyl-[glycine-cleavage complex H protein] + glycine + H(+) = N(6)-[(R)-S(8)-aminomethyldihydrolipoyl]-L-lysyl-[glycine-cleavage complex H protein] + CO2. In terms of biological role, the glycine cleavage system catalyzes the degradation of glycine. The P protein binds the alpha-amino group of glycine through its pyridoxal phosphate cofactor; CO(2) is released and the remaining methylamine moiety is then transferred to the lipoamide cofactor of the H protein. This is Glycine dehydrogenase (decarboxylating) from Flavobacterium johnsoniae (strain ATCC 17061 / DSM 2064 / JCM 8514 / BCRC 14874 / CCUG 350202 / NBRC 14942 / NCIMB 11054 / UW101) (Cytophaga johnsonae).